We begin with the raw amino-acid sequence, 394 residues long: Elongation factor Tu (394 aa).

The tr-type G domain maps to lysine 10–glutamine 204. Residues glycine 19 to threonine 26 form a G1 region. Residue glycine 19–threonine 26 participates in GTP binding. Mg(2+) is bound at residue threonine 26. Residues glycine 60–asparagine 64 are G2. The interval aspartate 81–glycine 84 is G3. Residues aspartate 81 to histidine 85 and asparagine 136 to aspartate 139 contribute to the GTP site. The segment at asparagine 136–aspartate 139 is G4. The interval serine 174–leucine 176 is G5.

It belongs to the TRAFAC class translation factor GTPase superfamily. Classic translation factor GTPase family. EF-Tu/EF-1A subfamily. Monomer.

It localises to the cytoplasm. It carries out the reaction GTP + H2O = GDP + phosphate + H(+). In terms of biological role, GTP hydrolase that promotes the GTP-dependent binding of aminoacyl-tRNA to the A-site of ribosomes during protein biosynthesis. The chain is Elongation factor Tu from Shewanella putrefaciens (Pseudomonas putrefaciens).